Consider the following 188-residue polypeptide: Small ribosomal subunit protein uS12m (188 aa).

A mitochondrion-targeting transit peptide spans M1–G63.

It belongs to the universal ribosomal protein uS12 family.

It localises to the mitochondrion. Functionally, protein S12 is involved in the translation initiation step. The sequence is that of Small ribosomal subunit protein uS12m (RPS12) from Oenothera elata subsp. hookeri (Hooker's evening primrose).